Here is a 64-residue protein sequence, read N- to C-terminus: Large ribosomal subunit protein uL29 (64 aa).

The protein belongs to the universal ribosomal protein uL29 family.

In Ligilactobacillus salivarius (strain UCC118) (Lactobacillus salivarius), this protein is Large ribosomal subunit protein uL29.